The sequence spans 469 residues: Glutamine synthetase (469 aa).

A GS beta-grasp domain is found at N14–T98. A GS catalytic domain is found at P106 to G469. Mg(2+)-binding residues include E131 and E133. ATP is bound at residue E209. E214 and E221 together coordinate Mg(2+). Residues N265–G266 and G266 each bind L-glutamate. H270 provides a ligand contact to Mg(2+). Residues H272–S274 and S274 contribute to the ATP site. The L-glutamate site is built by R322, E328, and R340. ATP contacts are provided by R340, R345, and K353. Position 358 (E358) interacts with Mg(2+). R360 lines the L-glutamate pocket. At Y398 the chain carries O-AMP-tyrosine.

This sequence belongs to the glutamine synthetase family. Oligomer of 12 subunits arranged in the form of two hexameric ring. It depends on Mg(2+) as a cofactor.

The protein resides in the cytoplasm. It carries out the reaction L-glutamate + NH4(+) + ATP = L-glutamine + ADP + phosphate + H(+). With respect to regulation, the activity of this enzyme could be controlled by adenylation under conditions of abundant glutamine. Its function is as follows. Catalyzes the ATP-dependent biosynthesis of glutamine from glutamate and ammonia. In Bradyrhizobium diazoefficiens (strain JCM 10833 / BCRC 13528 / IAM 13628 / NBRC 14792 / USDA 110), this protein is Glutamine synthetase.